A 92-amino-acid chain; its full sequence is Small ribosomal subunit protein uS19 (92 aa).

The protein belongs to the universal ribosomal protein uS19 family.

Protein S19 forms a complex with S13 that binds strongly to the 16S ribosomal RNA. This is Small ribosomal subunit protein uS19 from Rickettsia africae (strain ESF-5).